Consider the following 290-residue polypeptide: Glycine--tRNA ligase alpha subunit (290 aa).

It belongs to the class-II aminoacyl-tRNA synthetase family. In terms of assembly, tetramer of two alpha and two beta subunits.

The protein localises to the cytoplasm. It carries out the reaction tRNA(Gly) + glycine + ATP = glycyl-tRNA(Gly) + AMP + diphosphate. The sequence is that of Glycine--tRNA ligase alpha subunit from Prochlorococcus marinus (strain NATL2A).